Consider the following 269-residue polypeptide: Formamidopyrimidine-DNA glycosylase (269 aa).

The active-site Schiff-base intermediate with DNA is Pro2. The active-site Proton donor is the Glu3. The active-site Proton donor; for beta-elimination activity is the Lys57. DNA-binding residues include His90, Arg109, and Lys150. Residues 235-269 (QVYGRKGEPCRVCGTPIVASKHAQRATFYCRQCQK) form an FPG-type zinc finger. The Proton donor; for delta-elimination activity role is filled by Arg259.

It belongs to the FPG family. Monomer. Zn(2+) serves as cofactor.

The enzyme catalyses Hydrolysis of DNA containing ring-opened 7-methylguanine residues, releasing 2,6-diamino-4-hydroxy-5-(N-methyl)formamidopyrimidine.. The catalysed reaction is 2'-deoxyribonucleotide-(2'-deoxyribose 5'-phosphate)-2'-deoxyribonucleotide-DNA = a 3'-end 2'-deoxyribonucleotide-(2,3-dehydro-2,3-deoxyribose 5'-phosphate)-DNA + a 5'-end 5'-phospho-2'-deoxyribonucleoside-DNA + H(+). Its function is as follows. Involved in base excision repair of DNA damaged by oxidation or by mutagenic agents. Acts as a DNA glycosylase that recognizes and removes damaged bases. Has a preference for oxidized purines, such as 7,8-dihydro-8-oxoguanine (8-oxoG). Has AP (apurinic/apyrimidinic) lyase activity and introduces nicks in the DNA strand. Cleaves the DNA backbone by beta-delta elimination to generate a single-strand break at the site of the removed base with both 3'- and 5'-phosphates. This is Formamidopyrimidine-DNA glycosylase from Enterobacter sp. (strain 638).